Consider the following 324-residue polypeptide: MKVEELPFSLEQLRILKAIATEGSFKKAAESLYMTQPAISLQIQTLEKKLNIALFDRSGRRALMTEAGHLLLRYGDCILALCEETCHALEDLRNLQGGTLVIGASQTTGTYLMPRLIGLFRQRYPQVTVKLHVHSTRRISWNIANGQVDLAVIGGEVPHELQESLTITPYAEDELVLILPKSHPFAKLESIQKEDLYRLKFIALDAQSAIRKVIDKVLAQNGIDSNLFRVEMELNSIESIKNAVQSGLGAAFVSVSAIAKELELGILHWCRIENITIKRMLSIITNPNRYHSQAARIFSEEILTMFSLQSPEVKKRALSIIQNT.

Residues 8–65 form the HTH lysR-type domain; sequence FSLEQLRILKAIATEGSFKKAAESLYMTQPAISLQIQTLEKKLNIALFDRSGRRALMT. The segment at residues 25–44 is a DNA-binding region (H-T-H motif); the sequence is FKKAAESLYMTQPAISLQIQ.

This sequence belongs to the LysR transcriptional regulatory family.

Its subcellular location is the plastid. The protein resides in the cyanelle. Its function is as follows. Trans-acting transcriptional regulator of RuBisCO genes (rbcL and rbcS) expression. The polypeptide is Probable RuBisCO transcriptional regulator (rbcR) (Cyanophora paradoxa).